Here is a 467-residue protein sequence, read N- to C-terminus: Proton extrusion protein PxcA (467 aa).

Positions 146–161 (SQVRTTSSQPPENPSL) are enriched in polar residues. 2 disordered regions span residues 146-167 (SQVR…ALRT) and 186-205 (PQLI…KADT). Residues 191–203 (QRTEQSKKSRGKA) are compositionally biased toward basic and acidic residues. Transmembrane regions (helical) follow at residues 249–269 (FILL…ALIV), 352–372 (IFSV…IMVL), 391–411 (IIIL…WEVI), and 427–447 (FIFL…KYWI).

Belongs to the CemA family.

Its subcellular location is the cell inner membrane. Functionally, required for H(+) efflux immediately after light irradiation to form a rapid H(+) concentration gradient across the thylakoid membranes. Together with PxcL, contributes to transient H(+) uptake following dark to light transition. The chain is Proton extrusion protein PxcA from Nostoc sp. (strain PCC 7120 / SAG 25.82 / UTEX 2576).